The sequence spans 206 residues: Ribosomal RNA large subunit methyltransferase E (206 aa).

Residues Gly60, Trp62, Asp80, Asp96, and Asp121 each contribute to the S-adenosyl-L-methionine site. Lys161 functions as the Proton acceptor in the catalytic mechanism.

It belongs to the class I-like SAM-binding methyltransferase superfamily. RNA methyltransferase RlmE family.

The protein resides in the cytoplasm. The catalysed reaction is uridine(2552) in 23S rRNA + S-adenosyl-L-methionine = 2'-O-methyluridine(2552) in 23S rRNA + S-adenosyl-L-homocysteine + H(+). Specifically methylates the uridine in position 2552 of 23S rRNA at the 2'-O position of the ribose in the fully assembled 50S ribosomal subunit. In Stutzerimonas stutzeri (strain A1501) (Pseudomonas stutzeri), this protein is Ribosomal RNA large subunit methyltransferase E.